A 288-amino-acid chain; its full sequence is NH(3)-dependent NAD(+) synthetase (288 aa).

Gly-46–Ser-53 contributes to the ATP binding site. Asp-52 serves as a coordination point for Mg(2+). Arg-153 is a deamido-NAD(+) binding site. Thr-173 provides a ligand contact to ATP. Glu-178 contributes to the Mg(2+) binding site. Deamido-NAD(+)-binding residues include Lys-186 and Asp-193. 2 residues coordinate ATP: Lys-202 and Thr-224. Position 273-274 (His-273–Lys-274) interacts with deamido-NAD(+).

Belongs to the NAD synthetase family. As to quaternary structure, homodimer.

The catalysed reaction is deamido-NAD(+) + NH4(+) + ATP = AMP + diphosphate + NAD(+) + H(+). The protein operates within cofactor biosynthesis; NAD(+) biosynthesis; NAD(+) from deamido-NAD(+) (ammonia route): step 1/1. Catalyzes the ATP-dependent amidation of deamido-NAD to form NAD. Uses ammonia as a nitrogen source. The protein is NH(3)-dependent NAD(+) synthetase of Deinococcus geothermalis (strain DSM 11300 / CIP 105573 / AG-3a).